Reading from the N-terminus, the 352-residue chain is B1 bradykinin receptor (352 aa).

The Extracellular segment spans residues 1–41; that stretch reads MASWPPLELQSSNQSQLFPQNATACDNAPEAWDLLHRVLPT. Asn13 and Asn21 each carry an N-linked (GlcNAc...) asparagine glycan. The chain crosses the membrane as a helical span at residues 42-62; that stretch reads FIISICSFGLLGNLFVLLVFL. Residues 63 to 72 are Cytoplasmic-facing; it reads LPRRRLNVAE. Residues 73–93 traverse the membrane as a helical segment; that stretch reads IYLANLAASDLVFVLGLPFWA. Topologically, residues 94–110 are extracellular; it reads ENIWNQFNWPFGALLCR. Cys109 and Cys188 form a disulfide bridge. The chain crosses the membrane as a helical span at residues 111–131; that stretch reads VINGIIKANLFISIFLVVAIS. The Cytoplasmic portion of the chain corresponds to 132-153; sequence QDRYCVLVHPMASRRRQRRRQA. Residues 154–174 form a helical membrane-spanning segment; sequence RVTCVLIWVVGGLLSIPTFLL. At 175 to 206 the chain is on the extracellular side; sequence RSIQAVPDLNITACILLLPHEAWHFARIVELN. Asn184 carries N-linked (GlcNAc...) asparagine glycosylation. A helical transmembrane segment spans residues 207-227; sequence ILAFLLPLAAIIFFNYHILAS. The Cytoplasmic portion of the chain corresponds to 228 to 250; it reads LRGREEVSRTRCGGSKDSKTTAL. Residues 251–271 form a helical membrane-spanning segment; that stretch reads ILTLVVAFLVCWAPYHFFAFL. The Extracellular portion of the chain corresponds to 272–294; the sequence is EFLFQVQAVRGCFWEDFIDLGLQ. Residues 295 to 315 traverse the membrane as a helical segment; it reads LANFLAFTNSSLNPVIYVFVG. Topologically, residues 316–352 are cytoplasmic; the sequence is RLFRTKVWELYKQCTPKSLAPISSSHRKEIFQLFWRN. Residue Cys329 is the site of S-palmitoyl cysteine attachment.

Belongs to the G-protein coupled receptor 1 family. Bradykinin receptor subfamily. BDKRB1 sub-subfamily.

Its subcellular location is the cell membrane. This is a receptor for bradykinin. Could be a factor in chronic pain and inflammation. This Macaca mulatta (Rhesus macaque) protein is B1 bradykinin receptor (BDKRB1).